A 111-amino-acid chain; its full sequence is Large ribosomal subunit protein uL22 (111 aa).

Belongs to the universal ribosomal protein uL22 family. As to quaternary structure, part of the 50S ribosomal subunit.

Its function is as follows. This protein binds specifically to 23S rRNA; its binding is stimulated by other ribosomal proteins, e.g. L4, L17, and L20. It is important during the early stages of 50S assembly. It makes multiple contacts with different domains of the 23S rRNA in the assembled 50S subunit and ribosome. Functionally, the globular domain of the protein is located near the polypeptide exit tunnel on the outside of the subunit, while an extended beta-hairpin is found that lines the wall of the exit tunnel in the center of the 70S ribosome. The sequence is that of Large ribosomal subunit protein uL22 from Francisella tularensis subsp. tularensis (strain FSC 198).